Consider the following 71-residue polypeptide: UPF0346 protein SMU_1621c (71 aa).

This sequence belongs to the UPF0346 family.

In Streptococcus mutans serotype c (strain ATCC 700610 / UA159), this protein is UPF0346 protein SMU_1621c.